The chain runs to 119 residues: Holo-[acyl-carrier-protein] synthase (119 aa).

Mg(2+) contacts are provided by Asp-2 and Glu-51.

This sequence belongs to the P-Pant transferase superfamily. AcpS family. Mg(2+) is required as a cofactor.

Its subcellular location is the cytoplasm. The enzyme catalyses apo-[ACP] + CoA = holo-[ACP] + adenosine 3',5'-bisphosphate + H(+). Transfers the 4'-phosphopantetheine moiety from coenzyme A to a Ser of acyl-carrier-protein. The protein is Holo-[acyl-carrier-protein] synthase of Chlorobium luteolum (strain DSM 273 / BCRC 81028 / 2530) (Pelodictyon luteolum).